Consider the following 352-residue polypeptide: MDYQVSSPTYDIDYYTSEPCQKINVKQIAARLLPPLYSLVFIFGFVGNILVVLILINCKRLKSMTDIYLLNLAISDLLFLLTVPFWAHYAAAQWDFGNTMCQLLTGLYFIGFFSGIFFIILLTIDRYLAIVHAVFALKARTVTFGVVTSVITWVVAVFASLPGIIFTRSQREGLHYTCSSHFPYSQYQFWKNFQTLKMVILGLVLPLLVMVICYSGILKTLLRCRNEKKRHRAVRLIFTIMIVYFLFWAPYNIVLLLNTFQEFFGLNNCSSSNRLDQAMQVTETLGMTHCCINPIIYAFVGEKFRNYLLVFFQKHIAKRFCKCCSIFQQEAPERASSVYTRSTGEQEISVGL.

Over 1 to 30 (MDYQVSSPTYDIDYYTSEPCQKINVKQIAA) the chain is Extracellular. Tyrosine 3 is modified (sulfotyrosine). 2 O-linked (GalNAc...) serine glycosylation sites follow: serine 6 and serine 7. Tyrosine 10, tyrosine 14, and tyrosine 15 each carry sulfotyrosine. 2 disulfide bridges follow: cysteine 20–cysteine 269 and cysteine 101–cysteine 178. The chain crosses the membrane as a helical span at residues 31-58 (RLLPPLYSLVFIFGFVGNILVVLILINC). The Cytoplasmic portion of the chain corresponds to 59 to 68 (KRLKSMTDIY). A helical transmembrane segment spans residues 69-89 (LLNLAISDLLFLLTVPFWAHY). Topologically, residues 90–102 (AAAQWDFGNTMCQ) are extracellular. The helical transmembrane segment at 103–124 (LLTGLYFIGFFSGIFFIILLTI) threads the bilayer. At 125-141 (DRYLAIVHAVFALKART) the chain is on the cytoplasmic side. Residues 142–166 (VTFGVVTSVITWVVAVFASLPGIIF) traverse the membrane as a helical segment. Residues 167–198 (TRSQREGLHYTCSSHFPYSQYQFWKNFQTLKM) lie on the Extracellular side of the membrane. A helical membrane pass occupies residues 199-218 (VILGLVLPLLVMVICYSGIL). Residues 219-235 (KTLLRCRNEKKRHRAVR) are Cytoplasmic-facing. The helical transmembrane segment at 236 to 260 (LIFTIMIVYFLFWAPYNIVLLLNTF) threads the bilayer. Topologically, residues 261–277 (QEFFGLNNCSSSNRLDQ) are extracellular. A helical transmembrane segment spans residues 278–301 (AMQVTETLGMTHCCINPIIYAFVG). Residues 302–352 (EKFRNYLLVFFQKHIAKRFCKCCSIFQQEAPERASSVYTRSTGEQEISVGL) lie on the Cytoplasmic side of the membrane. 3 S-palmitoyl cysteine lipidation sites follow: cysteine 321, cysteine 323, and cysteine 324. Serine 336, serine 337, serine 342, and serine 349 each carry phosphoserine; by BARK1.

Belongs to the G-protein coupled receptor 1 family. As to quaternary structure, interacts with PRAF2. Efficient ligand binding to CCL3/MIP-1alpha and CCL4/MIP-1beta requires sulfation, O-glycosylation and sialic acid modifications. Glycosylation on Ser-6 is required for efficient binding of CCL4. Interacts with GRK2. Interacts with ARRB1 and ARRB2. Interacts with CNIH4. Interacts with S100A4; this interaction stimulates T-lymphocyte chemotaxis. Sulfated on at least 2 of the N-terminal tyrosines. Sulfation is required for efficient binding of the chemokines, CCL3 and CCL4. In terms of processing, palmitoylation in the C-terminal is important for cell surface expression. Post-translationally, phosphorylation on serine residues in the C-terminal is stimulated by binding CC chemokines especially by APO-RANTES. O-glycosylated, but not N-glycosylated. Ser-6 appears to be the major site even if Ser-7 may be also O-glycosylated. Also sialylated glycans present which contribute to chemokine binding. Thr-16 and Ser-17 may also be glycosylated and, if so, with small moieties such as a T-antigen.

It is found in the cell membrane. Its function is as follows. Receptor for a number of inflammatory CC-chemokines including CCL3/MIP-1-alpha, CCL4/MIP-1-beta and RANTES and subsequently transduces a signal by increasing the intracellular calcium ion level. May play a role in the control of granulocytic lineage proliferation or differentiation. Participates in T-lymphocyte migration to the infection site by acting as a chemotactic receptor. The sequence is that of C-C chemokine receptor type 5 (CCR5) from Macaca fascicularis (Crab-eating macaque).